We begin with the raw amino-acid sequence, 125 residues long: Large ribosomal subunit protein bL12 (125 aa).

Belongs to the bacterial ribosomal protein bL12 family. Homodimer. Part of the ribosomal stalk of the 50S ribosomal subunit. Forms a multimeric L10(L12)X complex, where L10 forms an elongated spine to which 2 to 4 L12 dimers bind in a sequential fashion. Binds GTP-bound translation factors.

In terms of biological role, forms part of the ribosomal stalk which helps the ribosome interact with GTP-bound translation factors. Is thus essential for accurate translation. The sequence is that of Large ribosomal subunit protein bL12 from Chlorobium limicola (strain DSM 245 / NBRC 103803 / 6330).